A 170-amino-acid chain; its full sequence is Ribosome maturation factor RimM (170 aa).

One can recognise a PRC barrel domain in the interval His-97–Phe-170.

It belongs to the RimM family. Binds ribosomal protein uS19.

It localises to the cytoplasm. In terms of biological role, an accessory protein needed during the final step in the assembly of 30S ribosomal subunit, possibly for assembly of the head region. Essential for efficient processing of 16S rRNA. May be needed both before and after RbfA during the maturation of 16S rRNA. It has affinity for free ribosomal 30S subunits but not for 70S ribosomes. This is Ribosome maturation factor RimM from Xylella fastidiosa (strain M23).